The following is a 200-amino-acid chain: MAGFKQLSGLVVPLDAANVDTDAIIPKQFLQAITRIGFGKHLFHEWRYLDVEGTKPNPEFVLNYPQYQGATILLARKNLGCGSSREHAPWALADYGFKVMIAPSFADIFYNNSLNNHMLPIRLSEEEVEEIFQWVWANEGKQIHVDLEAMTVTVGDKVYTFELDEFRRHCLLNGLDNIGLTLQHEDKISAYEKNIPAFLR.

Belongs to the LeuD family. LeuD type 1 subfamily. Heterodimer of LeuC and LeuD.

It catalyses the reaction (2R,3S)-3-isopropylmalate = (2S)-2-isopropylmalate. The protein operates within amino-acid biosynthesis; L-leucine biosynthesis; L-leucine from 3-methyl-2-oxobutanoate: step 2/4. Catalyzes the isomerization between 2-isopropylmalate and 3-isopropylmalate, via the formation of 2-isopropylmaleate. The sequence is that of 3-isopropylmalate dehydratase small subunit (leuD) from Haemophilus influenzae (strain ATCC 51907 / DSM 11121 / KW20 / Rd).